Here is a 236-residue protein sequence, read N- to C-terminus: Endo-1,4-beta-xylanase 3 (236 aa).

Positions 1–45 are cleaved as a signal peptide; sequence MQILTWALAALAAIPAVTAAPVETVEASSMDELVERSPNVTLVAR. N-linked (GlcNAc...) asparagine glycosylation is found at Asn-39 and Asn-106. The GH11 domain maps to 46–236; it reads GTPSSTGTHN…SSGSASMTVR (191 aa). Catalysis depends on Glu-131, which acts as the Nucleophile. Glu-223 functions as the Proton donor in the catalytic mechanism.

It belongs to the glycosyl hydrolase 11 (cellulase G) family.

The protein localises to the secreted. It carries out the reaction Endohydrolysis of (1-&gt;4)-beta-D-xylosidic linkages in xylans.. Its pathway is glycan degradation; xylan degradation. Endo-1,4-beta-xylanase involved in the hydrolysis of xylan, a major structural heterogeneous polysaccharide found in plant biomass representing the second most abundant polysaccharide in the biosphere, after cellulose. The protein is Endo-1,4-beta-xylanase 3 (XYL3) of Pyricularia grisea (Crabgrass-specific blast fungus).